The chain runs to 92 residues: Small ribosomal subunit protein uS19 (92 aa).

The protein belongs to the universal ribosomal protein uS19 family.

Functionally, protein S19 forms a complex with S13 that binds strongly to the 16S ribosomal RNA. This is Small ribosomal subunit protein uS19 from Xanthobacter autotrophicus (strain ATCC BAA-1158 / Py2).